The sequence spans 497 residues: Probable cytosol aminopeptidase (497 aa).

Mn(2+)-binding residues include Lys263 and Asp268. Lys275 is a catalytic residue. Positions 286, 345, and 347 each coordinate Mn(2+). The active site involves Arg349.

Belongs to the peptidase M17 family. Mn(2+) is required as a cofactor.

It localises to the cytoplasm. It carries out the reaction Release of an N-terminal amino acid, Xaa-|-Yaa-, in which Xaa is preferably Leu, but may be other amino acids including Pro although not Arg or Lys, and Yaa may be Pro. Amino acid amides and methyl esters are also readily hydrolyzed, but rates on arylamides are exceedingly low.. It catalyses the reaction Release of an N-terminal amino acid, preferentially leucine, but not glutamic or aspartic acids.. Its function is as follows. Presumably involved in the processing and regular turnover of intracellular proteins. Catalyzes the removal of unsubstituted N-terminal amino acids from various peptides. This chain is Probable cytosol aminopeptidase, found in Methylorubrum populi (strain ATCC BAA-705 / NCIMB 13946 / BJ001) (Methylobacterium populi).